The following is a 214-amino-acid chain: MQHEKALVVFSGGQDSTTCLFWAKQQFSHVEAVTFAYGQRHDAEIEVAKEIAAELDVPHHILDLSLLGQLTSNALTRHDLDIDNADVPNTFVDGRNHLFLSFAAVMAKQLGMHHIVTGVCETDFSGYPDCRDQFIKSLNVTLNLAMDYPFVIDTPLMWLDKKETWALADELGAFDYVKERTLTCYNGVIGSGCGECPACKLRQNGLTAYEEVRV.

10-20 contacts ATP; the sequence is FSGGQDSTTCL. Positions 184, 193, 196, and 199 each coordinate Zn(2+).

Belongs to the QueC family. Homodimer. Zn(2+) is required as a cofactor.

The enzyme catalyses 7-carboxy-7-deazaguanine + NH4(+) + ATP = 7-cyano-7-deazaguanine + ADP + phosphate + H2O + H(+). It functions in the pathway purine metabolism; 7-cyano-7-deazaguanine biosynthesis. Its function is as follows. Catalyzes the ATP-dependent conversion of 7-carboxy-7-deazaguanine (CDG) to 7-cyano-7-deazaguanine (preQ(0)). This is 7-cyano-7-deazaguanine synthase from Exiguobacterium sp. (strain ATCC BAA-1283 / AT1b).